We begin with the raw amino-acid sequence, 356 residues long: Tyrosine recombinase XerS (356 aa).

Residues 16–121 form the Core-binding (CB) domain; the sequence is IMPWYVLDYY…ALSSLYKYLT (106 aa). The 186-residue stretch at 169–354 folds into the Tyr recombinase domain; the sequence is AFLDYVDKEY…VNDEQKNALD (186 aa). Catalysis depends on residues Arg-210, Lys-234, His-306, Arg-309, and His-332. The active-site O-(3'-phospho-DNA)-tyrosine intermediate is the Tyr-341.

Belongs to the 'phage' integrase family. XerS subfamily.

It localises to the cytoplasm. FtsK is required for recombination. Site-specific tyrosine recombinase, which acts by catalyzing the cutting and rejoining of the recombining DNA molecules. Essential to convert dimers of the bacterial chromosome into monomers to permit their segregation at cell division. This Streptococcus pyogenes serotype M5 (strain Manfredo) protein is Tyrosine recombinase XerS.